We begin with the raw amino-acid sequence, 219 residues long: Octanoyltransferase (219 aa).

The 183-residue stretch at 37–219 (EHSPDQLWIL…DFNDVQVILQ (183 aa)) folds into the BPL/LPL catalytic domain. Residues 76–83 (RGGQVTWH), 143–145 (SLG), and 156–158 (GLA) contribute to the substrate site. C174 (acyl-thioester intermediate) is an active-site residue.

This sequence belongs to the LipB family.

Its subcellular location is the cytoplasm. It catalyses the reaction octanoyl-[ACP] + L-lysyl-[protein] = N(6)-octanoyl-L-lysyl-[protein] + holo-[ACP] + H(+). The protein operates within protein modification; protein lipoylation via endogenous pathway; protein N(6)-(lipoyl)lysine from octanoyl-[acyl-carrier-protein]: step 1/2. Catalyzes the transfer of endogenously produced octanoic acid from octanoyl-acyl-carrier-protein onto the lipoyl domains of lipoate-dependent enzymes. Lipoyl-ACP can also act as a substrate although octanoyl-ACP is likely to be the physiological substrate. This is Octanoyltransferase from Acinetobacter baylyi (strain ATCC 33305 / BD413 / ADP1).